The sequence spans 178 residues: Phosphopantetheine adenylyltransferase (178 aa).

Residue Ser8 coordinates substrate. ATP-binding positions include 8 to 9 (SF) and His16. Residues Lys40, Thr72, and Arg86 each coordinate substrate. Residues 87 to 89 (GLR), Glu97, and 122 to 128 (YSFLSSS) contribute to the ATP site.

The protein belongs to the bacterial CoaD family. In terms of assembly, homohexamer. Requires Mg(2+) as cofactor.

It localises to the cytoplasm. The catalysed reaction is (R)-4'-phosphopantetheine + ATP + H(+) = 3'-dephospho-CoA + diphosphate. Its pathway is cofactor biosynthesis; coenzyme A biosynthesis; CoA from (R)-pantothenate: step 4/5. Its function is as follows. Reversibly transfers an adenylyl group from ATP to 4'-phosphopantetheine, yielding dephospho-CoA (dPCoA) and pyrophosphate. This is Phosphopantetheine adenylyltransferase from Picosynechococcus sp. (strain ATCC 27264 / PCC 7002 / PR-6) (Agmenellum quadruplicatum).